Here is a 352-residue protein sequence, read N- to C-terminus: Histidine biosynthesis bifunctional protein HisB (352 aa).

Positions 1-164 (MSQKILFIDR…EIENEILSSF (164 aa)) are histidinol-phosphatase. The active-site Nucleophile is the Asp-9. Positions 9 and 11 each coordinate Mg(2+). The active-site Proton donor is Asp-11. The Zn(2+) site is built by Cys-93, His-95, Cys-101, and Cys-103. Mg(2+) is bound at residue Asp-130. Residues 165–352 (RSASYQRTTK…ENLASSKGVI (188 aa)) are imidazoleglycerol-phosphate dehydratase.

In the N-terminal section; belongs to the histidinol-phosphatase family. It in the C-terminal section; belongs to the imidazoleglycerol-phosphate dehydratase family. Mg(2+) is required as a cofactor. Requires Zn(2+) as cofactor.

Its subcellular location is the cytoplasm. The catalysed reaction is D-erythro-1-(imidazol-4-yl)glycerol 3-phosphate = 3-(imidazol-4-yl)-2-oxopropyl phosphate + H2O. It carries out the reaction L-histidinol phosphate + H2O = L-histidinol + phosphate. It participates in amino-acid biosynthesis; L-histidine biosynthesis; L-histidine from 5-phospho-alpha-D-ribose 1-diphosphate: step 6/9. The protein operates within amino-acid biosynthesis; L-histidine biosynthesis; L-histidine from 5-phospho-alpha-D-ribose 1-diphosphate: step 8/9. The sequence is that of Histidine biosynthesis bifunctional protein HisB from Campylobacter jejuni subsp. jejuni serotype O:6 (strain 81116 / NCTC 11828).